A 257-amino-acid chain; its full sequence is MVDIHSTAIIEDGAIIEDGVKIGPYCIVGKDVVIKKGTVLQSHVVVEGITEIGENNTIYSFVSIGKDNQDLKYKGEPTKTIIGNNNSIREFVTIHRGTDDRWETRIGNGNLIMAYVHVAHDVIIGDDCIFSNNVTLAGHVVIDSHAIIGGLTPIHQFTRIGSYSMIGGASAVSQDVCPFVLAAGNTVVLRGLNIVGLRRRGFSDEEISNLKKAYRILFRQGLQLKDALEELEKDFSEDKNVKYLVDFIKSSDRGIAR.

This sequence belongs to the transferase hexapeptide repeat family. LpxA subfamily. Homotrimer.

Its subcellular location is the cytoplasm. It catalyses the reaction a (3R)-hydroxyacyl-[ACP] + UDP-N-acetyl-alpha-D-glucosamine = a UDP-3-O-[(3R)-3-hydroxyacyl]-N-acetyl-alpha-D-glucosamine + holo-[ACP]. It functions in the pathway glycolipid biosynthesis; lipid IV(A) biosynthesis; lipid IV(A) from (3R)-3-hydroxytetradecanoyl-[acyl-carrier-protein] and UDP-N-acetyl-alpha-D-glucosamine: step 1/6. Functionally, involved in the biosynthesis of lipid A, a phosphorylated glycolipid that anchors the lipopolysaccharide to the outer membrane of the cell. The protein is Acyl-[acyl-carrier-protein]--UDP-N-acetylglucosamine O-acyltransferase of Fusobacterium nucleatum subsp. nucleatum (strain ATCC 25586 / DSM 15643 / BCRC 10681 / CIP 101130 / JCM 8532 / KCTC 2640 / LMG 13131 / VPI 4355).